Consider the following 102-residue polypeptide: Putative septation protein SpoVG (102 aa).

The disordered stretch occupies residues 83 to 102 (TDEVIPDKNATSDNEESDEA).

This sequence belongs to the SpoVG family.

Its function is as follows. Could be involved in septation. The polypeptide is Putative septation protein SpoVG (Staphylococcus epidermidis (strain ATCC 35984 / DSM 28319 / BCRC 17069 / CCUG 31568 / BM 3577 / RP62A)).